We begin with the raw amino-acid sequence, 975 residues long: MKLEHPDRLMNRTPLSLAALETHDAFAERHIGPDAASQQAMLDTLGFASRAALIDAVIPASIRRAETLPLGPFAQPKSEAEALAALRALADKNQVFRSYIGQGYHDTHTPAVILRNVLENPAWYTAYTPYQPEISQGRLEALLNFQQMVADLTGLAISNASLLDEATAAAEAMTLLQRTGKPASNVFYVADDVLPQTLEVIRTRALPVGIEVKTGPAADAAQANAFGVLLQYPGVNGDVRDYRALTEAIHAAGGHVVVAADLLALTVLTPPGEWGADVAVGNTQRFGVPMGFGGPHAAYLAVRDEFKRQMPGRLVGVTVDAQGKPALRLALQTREQHIRREKATSNVCTAQALLAIMASMYAVYHGPHGLKTIALRVNRIAALFAAGVKQLGFAPINDTFFDTLTIDTGARTAQVHEFAKARRINLRRVSDTQVGVSFDETTTRDDLAALLAVFAQAAGGTAPSVDALDAGLAGVAALPAGLERTSAYLTHHVFNRHHSETEMLRYLRSLSDKDLALDRSMIPLGSCTMKLNATSEMLPVTWPEFGRIHPFAPAEQTVGYREMIDQLEQMLVAATGYAAVSLQPNAGSQGEYAGLLIIHAYHASRGEAHRDVCLIPASAHGTNPASAHMAGMKVVVVACDAQGNVDIADLKAKAEQHANDLAAIMITYPSTHGVFEQNVREICEIVHAHGGQVYVDGANMNAMVGLTAPGQFGGDVSHLNLHKTFCIPHGGGGPGVGPVAVGPHLAKFLPNQRSTGYTREENGIGAVSAAPYGSASILPISWMYIAMMGAKNLTAATETAILNANYIAKRLAPHYPVLYSGPGGLVAHECILDLRPIKETSGISVDDVAKRLMDYGFHAPTMSFPVPGTLMVEPTESESQEELDRFIAAMIAIREEIRAVEEGRADREDNPLRHAPHTAAVVTANEWPHAYSREQAAYPVASLGTNKYWPPVGRADNAYGDRNLFCSCVPMSDYA.

K723 carries the post-translational modification N6-(pyridoxal phosphate)lysine.

It belongs to the GcvP family. The glycine cleavage system is composed of four proteins: P, T, L and H. The cofactor is pyridoxal 5'-phosphate.

It catalyses the reaction N(6)-[(R)-lipoyl]-L-lysyl-[glycine-cleavage complex H protein] + glycine + H(+) = N(6)-[(R)-S(8)-aminomethyldihydrolipoyl]-L-lysyl-[glycine-cleavage complex H protein] + CO2. In terms of biological role, the glycine cleavage system catalyzes the degradation of glycine. The P protein binds the alpha-amino group of glycine through its pyridoxal phosphate cofactor; CO(2) is released and the remaining methylamine moiety is then transferred to the lipoamide cofactor of the H protein. This is Glycine dehydrogenase (decarboxylating) from Burkholderia ambifaria (strain ATCC BAA-244 / DSM 16087 / CCUG 44356 / LMG 19182 / AMMD) (Burkholderia cepacia (strain AMMD)).